The chain runs to 67 residues: MPKMKTKSSAKKRFRVRPGGTVKRGQAFKRHILTKKTTKNKRHLRGIVNVHEGDMGSIAKMLPSAGL.

This sequence belongs to the bacterial ribosomal protein bL35 family.

The chain is Large ribosomal subunit protein bL35 from Acidovorax ebreus (strain TPSY) (Diaphorobacter sp. (strain TPSY)).